Consider the following 2512-residue polypeptide: MDMKLNDIENENFINQMKGVAIVGIGFRIPSGNSENSISSPDDLFNNLKNGFDGVSSTSERWSDNYHKLGEISSPNAGLLPLNEWKSFDPLFFGINPSDAHHIDPQQRLLLKCTWEALEDASIDPISIRGTNTSVFIGSSTIDYLHANKHPDLILKNAIGFSPSTLSNRISYCFDIHGPSLSIDTACSSSMNAVTQGYHSILNGTSNMSIVGGVNFVIDVETIKGFSYLNMLSKTHGKCKAFDESGDGFTRGECAGVVVLKKLDDAIRDGNRIYCIINGISSNIDGNGIADKANFYSPSKQSQFNNINLAFKSTNGKISVNDIQYIEAHGTGTKTGDPIETEAISMAFKNRDKSTPILIGSIKSNIGHCEAGSGVVSLIKCCLMFKYQCFLPNIHFKNPNPLIKFNEWNLKVVTSPIPFNRNNEKSVSMMINNFGVTGSNCCLLISEFKKQDYESYENNIGSINKNILVPFSANSPKSLDQYQSKIKNIINNQFNFIDFANNQIYSKSNYLYQRSVVIANNSNDLVNKILNKKHIQTKNPIISNMSFKGKNPITIFVFSGQGSQYPKMALELYNNEVIFKKSIDLIDSKLSKYYGYSVLEKLRSIGDDDTTSIHDPTIAQPAMCMFSVSLFELYKHWGVNPSFILGHSLGEIPTSYCSGMIDLDTFCYTVYQRSIAQTKTHGNGRMLSINISDEEFKSMYSQKYPQIEIACYNSPQSIVVAGNESILNEISKELKEKEIFTAMLGSLSSFHTSSQQCTKDSILQLNIESKKSKVPTFSTVTTNLFNESDPFNSQYVYDNIINPVKFTQTISNIYKHIESNQLDNDIVFIEIAPHPTLSFYIKQMVPSSLNESVSVYSALHKKKNDVEEFQQTISNLYCQNGYNINFKCQFNNKKSNQKINLPLYQWDDELYFAQTQVLEQHRKEGPPIDHLGLSNSYYSPFKNSYRTFIDIKNKPFQYLKGHMVKGKYYFPGCGYIDNIIQLYKNQDIFISFIEFKTPLILIEGINQCLQTNIQQTGKSEYRAQFHFKDQKSNEWIQSSNANFQLLDHTIEMPPKYNIEEIIKNKCTLARLTKNEIYTHIKSKTGLNYTAMFQGATECYIGVDCTLSVVSIESQTNSFLNIPILDSVFHGNISLINDQCQIVFDKVHGLKYYSSNIPNDYKDKSVYVYAKLKSKTSDSYSASFTVLLSDGTVVYEIDEAFSKSLIPIKELLKIEYPNDELFSINLQPKDSPIPAPSTFKSLIYENDRFNAEPPMVENLFQYISTIFYKNIINRCPEINIDIIKSLSIDEIISNFSKISKHERLFKYVFETIKENGILNSLEEKDDTYFVFNEVLIKSSRVISKLLFPLENDNDNEDTPQLLFQNGLMDKVYKCRYLKNKNQMIAHIIKHSIKEIINNNIIIRILEFGGGTASLSVEVIEEIVTLLQENPNYQVEIEYTWSDISPAFIVDTKNKINKIIKGAGITNGLNVIYHPLTIDESLVELQSIKPSYYDFVIMSNVLHVVKDIKQAVEQMYQLLIPNGQLLFVEPPYKSIICDSLFGSFEQWWAFTDTDIRKDHCCLSQDGWYKLLKWSNFESIEMSTESKFMGSVIQAQKPSFTSLINQQPKYDNIIIFGNNCPNFIDNIKPFSNFNEFIQIETIQEFDQLINKSTITNDSIIYFIKSINQLSLDNYKQATLEYIEINQKLLQINSLCKHVLIVNDSRKTNYLASSIVGAARYFDEFQQLKLHTLDFDYDSTQNYLISKNNKMVQFINNLIDSKTNVHKEMIIINNKVYYEIVQKEKNLKLKYNSESFEQQDNLMCSLSPNLEYQLQSKQIKLRDNQVEVKTIATGINNKDYLVYSGLEGSVNSNTPQFGYEFSGIITRVGNNVKDYKVGDNVFGLSNSCTSSNIIVNHERIQIKPSNISHIEAASIPIDYLTSFMSLFNVGCLNIEDNESILIHLGSDSFGLSTFEILKWKGFKSNLFVTVNSDEIKQYLLNNYGDLITAIYSNTDKGYVSQIKNKLIEQGSNDNGVDLILNTLPSDFMDSNFQLLAINGRIIDLSNDHLNQSEYMKNVNFTLNRGYHNFDLMSQRNSRINRSLLTISKAIENGELKLIPIKEFSNSDINDAIEFIIEENRIDKIVVSHDHEVYQELYAKFSNENDFSILKSNYQINSNNLGKNILITGQSGIILEILKWIIKYSNINTIENVIILSRSSLKWELELLINQTKLSNNNIKFHFKSVDVGDSEQVDNAINEILNENQEIINIHSIFHFAFTQIACKVQEINMKHLDISHGAKTMGAINLHNQSIKRNWKLINFVISSSIASLVGSTDQCSYVCANALLDSFSKYRVSLGLPSTSINLGAIESTGFVSKNESISVFLDGSGIIPTPINQVLGLLDLQIQNPGKFTNSMVAKFNPLNFSNNEQINLLLKMDYIFNLHSNGYTKVKESAGSKNVDELFIKKISDLFSIDESKINKDIRLIDYGADSLVIVQLKNWVDQEIGFNLITIQQLQNNTINVSIKIILNFLKKINK.

The Ketosynthase family 3 (KS3) domain occupies 17-447 (MKGVAIVGIG…GSNCCLLISE (431 aa)). Residues Cys187, His329, and His368 each act as for beta-ketoacyl synthase activity in the active site. Positions 638-671 (GVNPSFILGHSLGEIPTSYCSGMIDLDTFCYTVY) are acyl/malonyl transferase. Catalysis depends on Ser648, which acts as the For acyl/malonyl transferase activity. Residues 928–1050 (IDHLGLSNSY…ANFQLLDHTI (123 aa)) form an N-terminal hotdog fold region. The region spanning 928–1210 (IDHLGLSNSY…SKSLIPIKEL (283 aa)) is the PKS/mFAS DH domain. His962 (proton acceptor; for dehydratase activity) is an active-site residue. Positions 1067 to 1210 (TLARLTKNEI…SKSLIPIKEL (144 aa)) are C-terminal hotdog fold. The Proton donor; for dehydratase activity role is filled by Asp1125. A Carrier domain is found at 2430 to 2507 (AGSKNVDELF…VSIKIILNFL (78 aa)). An O-(pantetheine 4'-phosphoryl)serine modification is found at Ser2467.

Requires pantetheine 4'-phosphate as cofactor.

Probable polyketide synthase. The polypeptide is Probable polyketide synthase 5 (pks5) (Dictyostelium discoideum (Social amoeba)).